We begin with the raw amino-acid sequence, 385 residues long: tRNA-specific 2-thiouridylase MnmA (385 aa).

Residues 8–15 (AMSGGVDS) and leucine 34 contribute to the ATP site. Catalysis depends on cysteine 102, which acts as the Nucleophile. Cysteine 102 and cysteine 200 are joined by a disulfide. Glycine 126 is a binding site for ATP. Residues 150–152 (KDQ) are interaction with tRNA. Cysteine 200 serves as the catalytic Cysteine persulfide intermediate. Residues 307–308 (RY) form an interaction with tRNA region.

It belongs to the MnmA/TRMU family.

Its subcellular location is the cytoplasm. It carries out the reaction S-sulfanyl-L-cysteinyl-[protein] + uridine(34) in tRNA + AH2 + ATP = 2-thiouridine(34) in tRNA + L-cysteinyl-[protein] + A + AMP + diphosphate + H(+). Its function is as follows. Catalyzes the 2-thiolation of uridine at the wobble position (U34) of tRNA, leading to the formation of s(2)U34. This is tRNA-specific 2-thiouridylase MnmA from Heliobacterium modesticaldum (strain ATCC 51547 / Ice1).